Consider the following 591-residue polypeptide: Aspartate--tRNA ligase (591 aa).

An L-aspartate-binding site is contributed by glutamate 171. The tract at residues 195-198 is aspartate; the sequence is QLFK. Arginine 217 provides a ligand contact to L-aspartate. Residues 217–219 and glutamine 226 each bind ATP; that span reads RDE. Residue histidine 448 coordinates L-aspartate. Glutamate 482 serves as a coordination point for ATP. Arginine 489 is an L-aspartate binding site. Position 534–537 (534–537) interacts with ATP; the sequence is GLDR.

This sequence belongs to the class-II aminoacyl-tRNA synthetase family. Type 1 subfamily. Homodimer.

Its subcellular location is the cytoplasm. It catalyses the reaction tRNA(Asp) + L-aspartate + ATP = L-aspartyl-tRNA(Asp) + AMP + diphosphate. Catalyzes the attachment of L-aspartate to tRNA(Asp) in a two-step reaction: L-aspartate is first activated by ATP to form Asp-AMP and then transferred to the acceptor end of tRNA(Asp). The sequence is that of Aspartate--tRNA ligase from Edwardsiella ictaluri (strain 93-146).